The chain runs to 135 residues: Probable 5-hydroxyisourate hydrolase R09H10.3 (135 aa).

The N-terminal stretch at 1–20 (MNKFSLFFALTATLMTITES) is a signal peptide. 3 residues coordinate substrate: histidine 30, arginine 68, and tyrosine 132.

Belongs to the transthyretin family. 5-hydroxyisourate hydrolase subfamily. As to quaternary structure, homotetramer.

The enzyme catalyses 5-hydroxyisourate + H2O = 5-hydroxy-2-oxo-4-ureido-2,5-dihydro-1H-imidazole-5-carboxylate + H(+). Catalyzes the hydrolysis of 5-hydroxyisourate (HIU) to 2-oxo-4-hydroxy-4-carboxy-5-ureidoimidazoline (OHCU). This is Probable 5-hydroxyisourate hydrolase R09H10.3 from Caenorhabditis elegans.